Reading from the N-terminus, the 121-residue chain is Large ribosomal subunit protein uL22c (121 aa).

Belongs to the universal ribosomal protein uL22 family. Part of the 50S ribosomal subunit.

It is found in the plastid. Its subcellular location is the chloroplast. In terms of biological role, this protein binds specifically to 23S rRNA. Its function is as follows. The globular domain of the protein is located near the polypeptide exit tunnel on the outside of the subunit, while an extended beta-hairpin is found that lines the wall of the exit tunnel in the center of the 70S ribosome. This Lemna minor (Common duckweed) protein is Large ribosomal subunit protein uL22c (rpl22).